The following is a 315-amino-acid chain: Eukaryotic translation initiation factor 2 subunit 1 (315 aa).

Positions 17–88 (EDVVMVNVRS…EKGYIDLSKR (72 aa)) constitute an S1 motif domain. A phosphoserine mark is found at serine 49 and serine 52. A disordered region spans residues 292 to 315 (RLERENAEVDGDDDAEEMEAKTED). The segment covering 299–308 (EVDGDDDAEE) has biased composition (acidic residues).

Belongs to the eIF-2-alpha family. In terms of assembly, eukaryotic translation initiation factor 2 eIF2 is a heterotrimeric complex composed of an alpha (EIF2S1), a beta (EIF2S2) and a gamma (EIF2S3) chain. Post-translationally, phosphorylation at Ser-49 and Ser-52 stabilizes the eIF-2/GDP/eIF2B complex and prevents GDP/GTP exchange reaction, thus impairing the recycling of eIF-2 between successive rounds of initiation and leading to global inhibition of translation, while concomitantly initiating the preferential translation of integrated stress response (ISR)-specific mRNAs.

The protein localises to the cytoplasm. The protein resides in the stress granule. Its subcellular location is the cytosol. Activity is regulated by phosphorylation at Ser-49 and Ser-52, which stabilizes the eIF2/GDP/eIF2B complex and prevents the eIF2B-mediated exchange of GDP for GTP, thereby preventing the formation of the 43S pre-initiation complex (43S PIC). This results in the global attenuation of 5' cap-dependent protein synthesis and concomitant translation of ISR-specific mRNAs that contain a short upstream open reading frame (uORF) in their 5' UTR. In terms of biological role, member of the eIF2 complex that functions in the early steps of protein synthesis by forming a ternary complex with GTP and initiator tRNA. This complex binds to a 40S ribosomal subunit, followed by mRNA binding to form a 43S pre-initiation complex. Junction of the 60S ribosomal subunit to form the 80S initiation complex is preceded by hydrolysis of the GTP bound to eIF2 and release of an eIF2-GDP binary complex. In order for eIF2 to recycle and catalyze another round of initiation, the GDP bound to eIF2 must exchange with GTP by way of a reaction catalyzed by eIF2B. EIF2S1/eIF2-alpha is a key component of the integrated stress response (ISR), required for adaptation to various stress: phosphorylation by metabolic-stress sensing protein kinases (EIF2AK1/HRI, EIF2AK2/PKR, EIF2AK3/PERK and EIF2AK4/GCN2) in response to stress converts EIF2S1/eIF2-alpha in a global protein synthesis inhibitor, leading to a attenuation of cap-dependent translation, while concomitantly initiating the preferential translation of ISR-specific mRNAs, such as the transcriptional activators ATF4 and QRICH1. The polypeptide is Eukaryotic translation initiation factor 2 subunit 1 (EIF2S1) (Gallus gallus (Chicken)).